The primary structure comprises 486 residues: Acetyl-coenzyme A carboxylase carboxyl transferase subunit beta, chloroplastic (486 aa).

One can recognise a CoA carboxyltransferase N-terminal domain in the interval 224–486 (LWVQCENCYG…FQFHGFFPRP (263 aa)). The Zn(2+) site is built by C228, C231, C247, and C250. The segment at 228–250 (CENCYGLNYKKFFSSKMNICEQC) adopts a C4-type zinc-finger fold.

This sequence belongs to the AccD/PCCB family. As to quaternary structure, acetyl-CoA carboxylase is a heterohexamer composed of biotin carboxyl carrier protein, biotin carboxylase and 2 subunits each of ACCase subunit alpha and ACCase plastid-coded subunit beta (accD). Zn(2+) serves as cofactor.

It localises to the plastid. Its subcellular location is the chloroplast stroma. It catalyses the reaction N(6)-carboxybiotinyl-L-lysyl-[protein] + acetyl-CoA = N(6)-biotinyl-L-lysyl-[protein] + malonyl-CoA. It participates in lipid metabolism; malonyl-CoA biosynthesis; malonyl-CoA from acetyl-CoA: step 1/1. Its function is as follows. Component of the acetyl coenzyme A carboxylase (ACC) complex. Biotin carboxylase (BC) catalyzes the carboxylation of biotin on its carrier protein (BCCP) and then the CO(2) group is transferred by the transcarboxylase to acetyl-CoA to form malonyl-CoA. This chain is Acetyl-coenzyme A carboxylase carboxyl transferase subunit beta, chloroplastic, found in Nymphaea alba (White water-lily).